The sequence spans 281 residues: Ribosomal RNA small subunit methyltransferase A (281 aa).

Residues Asn18, Leu20, Gly45, Glu66, Asp91, and Asn118 each contribute to the S-adenosyl-L-methionine site.

This sequence belongs to the class I-like SAM-binding methyltransferase superfamily. rRNA adenine N(6)-methyltransferase family. RsmA subfamily.

The protein resides in the cytoplasm. The catalysed reaction is adenosine(1518)/adenosine(1519) in 16S rRNA + 4 S-adenosyl-L-methionine = N(6)-dimethyladenosine(1518)/N(6)-dimethyladenosine(1519) in 16S rRNA + 4 S-adenosyl-L-homocysteine + 4 H(+). Its function is as follows. Specifically dimethylates two adjacent adenosines (A1518 and A1519) in the loop of a conserved hairpin near the 3'-end of 16S rRNA in the 30S particle. May play a critical role in biogenesis of 30S subunits. The polypeptide is Ribosomal RNA small subunit methyltransferase A (Histophilus somni (strain 129Pt) (Haemophilus somnus)).